We begin with the raw amino-acid sequence, 296 residues long: Protein FAM110A (296 aa).

Disordered stretches follow at residues 61-97 (NTRQ…PCSG) and 117-192 (PVSP…KSDL). Composition is skewed to pro residues over residues 139-148 (PATPPRPPPS) and 161-170 (PASPARPYPS).

This sequence belongs to the FAM110 family. May interact with CSPP1.

It is found in the cytoplasm. The protein resides in the cytoskeleton. Its subcellular location is the microtubule organizing center. It localises to the centrosome. The protein localises to the spindle pole. The chain is Protein FAM110A (Fam110a) from Mus musculus (Mouse).